The chain runs to 1283 residues: Rab11 family-interacting protein 1 (1283 aa).

The 126-residue stretch at 1 to 126 folds into the C2 domain; sequence MSLMVSAGRG…DQGRRKTQWY (126 aa). The span at 161-185 shows a compositional bias: basic and acidic residues; sequence SMKDKSRNPFGKLKDKIKGKNKDSG. The interval 161–281 is disordered; the sequence is SMKDKSRNPF…VMSHKRTAST (121 aa). 4 positions are modified to phosphoserine: Ser184, Ser202, Ser206, and Ser234. The segment covering 225–239 has biased composition (polar residues); that stretch reads NLQKTPLSQSMSVLP. Residues 257-266 are compositionally biased toward acidic residues; that stretch reads WDEDDNEDES. Phosphoserine is present on residues Ser300, Ser315, Ser339, Ser341, Ser343, Ser345, Ser356, Ser357, and Ser382. Disordered regions lie at residues 330–727, 741–782, 835–913, 969–993, and 1037–1141; these read EAKG…QEVP, VGEL…ASVP, PQEL…LFRM, DERIDQVEDDGDQVEDDGETAKSST, and ASVT…RVEN. The segment covering 419–433 has biased composition (basic and acidic residues); sequence ATKEAKESKKPESRR. Phosphoserine is present on Ser435. Positions 442–451 are enriched in basic and acidic residues; sequence GKKDVAKGSE. Ser477 carries the phosphoserine modification. Positions 482 to 491 are enriched in basic and acidic residues; that stretch reads DLVRRSEKDT. Phosphoserine occurs at positions 529 and 545. Residues 588–612 are compositionally biased toward low complexity; sequence SSESPSVFSSLSSPIAAPISTSTPI. A compositionally biased stretch (polar residues) spans 637–652; it reads QTESLTPVPNSGSSAL. The segment covering 698–715 has biased composition (basic and acidic residues); the sequence is ETGRQEEELPRFPCKKQD. Ser758 is modified (phosphoserine). The segment covering 855-866 has biased composition (basic and acidic residues); the sequence is ESPHAEDSERES. Positions 975–986 are enriched in acidic residues; that stretch reads VEDDGDQVEDDG. Polar residues predominate over residues 1037-1048; sequence ASVTAPSEQTTE. The segment covering 1116-1131 has biased composition (basic and acidic residues); sequence SDTHHTSTAESQKKAT. Ser1135 carries the post-translational modification Phosphoserine. One can recognise an FIP-RBD domain in the interval 1211–1273; sequence KKYSPSDPAF…EETPNILRIP (63 aa). The segment at 1219 to 1283 is necessary for interaction with RAB4A and RAB11A, subcellular location and endosomal recycling; that stretch reads AFAYAQLTHD…TQVGKKAGKM (65 aa).

As to quaternary structure, interacts with RAB11A (GTP-bound form); the interaction induces RAB11FIP1 recruitment to membranes. Interacts with RAB14 (GTP-bound form). Homooligomer. Isoform 2 interacts with RAB4A, RAB11A, RAB11B and RAB25. According to PubMed:15280022, RAB4A binding to RAB11FIP1 is of very low affinity in vitro and in vivo. Isoform 2 is expressed in brain, heart, testis, lung, spleen, ovary and small intestine.

It is found in the recycling endosome. It localises to the cytoplasmic vesicle. The protein localises to the phagosome membrane. A Rab11 effector protein involved in the endosomal recycling process. Also involved in controlling membrane trafficking along the phagocytic pathway and in phagocytosis. Interaction with RAB14 may function in the process of neurite formation. This Homo sapiens (Human) protein is Rab11 family-interacting protein 1.